A 131-amino-acid polypeptide reads, in one-letter code: Transcription antitermination protein NusB (131 aa).

This sequence belongs to the NusB family.

Its function is as follows. Involved in transcription antitermination. Required for transcription of ribosomal RNA (rRNA) genes. Binds specifically to the boxA antiterminator sequence of the ribosomal RNA (rrn) operons. This chain is Transcription antitermination protein NusB, found in Agathobacter rectalis (strain ATCC 33656 / DSM 3377 / JCM 17463 / KCTC 5835 / VPI 0990) (Eubacterium rectale).